Here is a 258-residue protein sequence, read N- to C-terminus: Ribonuclease HII (258 aa).

Positions 1 to 20 (MRVAPSGGPPHHHAMIRATP) are disordered. Basic residues predominate over residues 10-20 (PHHHAMIRATP). Residues 48–236 (WPVAGCDEVG…VVAARERHRA (189 aa)) form the RNase H type-2 domain. A divalent metal cation-binding residues include D54, E55, and D145.

Belongs to the RNase HII family. It depends on Mn(2+) as a cofactor. The cofactor is Mg(2+).

It is found in the cytoplasm. The catalysed reaction is Endonucleolytic cleavage to 5'-phosphomonoester.. In terms of biological role, endonuclease that specifically degrades the RNA of RNA-DNA hybrids. The chain is Ribonuclease HII from Nitrobacter winogradskyi (strain ATCC 25391 / DSM 10237 / CIP 104748 / NCIMB 11846 / Nb-255).